Consider the following 735-residue polypeptide: 2-5A-dependent ribonuclease (735 aa).

A disordered region spans residues 1–21 (METPDYNTPQGGTPSAGSQRT). 9 ANK repeats span residues 24 to 53 (EDDS…DANA), 58 to 87 (WGWT…DPHR), 91 to 120 (NGAT…DVNE), 124 to 153 (NGFT…NVNL), 167 to 197 (GGAT…EVDA), 201 to 234 (MGRN…DVNV), 238 to 268 (RGKT…NIDA), 272 to 301 (EGKT…DKCD), and 303 to 328 (LVWI…NPDT). The tract at residues 26–51 (DSSLIKAVQKGDVVRVQQLLEKGADA) is binding to TMEV Leader protein. 2-5A binding (P-loop) regions lie at residues 229-242 (GADV…GKTP) and 253-275 (GLVQ…EGKT). The Protein kinase domain occupies 364–584 (IHDDYKIAGT…LVDLLGHPFF (221 aa)). The C6-type zinc finger occupies 401–436 (CKEVSCLRDCGDHSNLVAFYGREDDKGCLYVCVSLC). The KEN domain maps to 587–722 (WENRYRTLRN…KHFPQPPPRL (136 aa)). The tract at residues 714-735 (HFPQPPPRLSVPEAVGPGGIQS) is disordered.

It belongs to the protein kinase superfamily. (Microbial infection) Interacts (via N-terminus) with TMEV leader protein; this interaction prevents RNASEL activation by its substrate 2'-5' oligoadenylates. In terms of assembly, monomer (inactive form) or homodimer. Interacts with ABCE1; this interaction inhibits the RNASEL. Mn(2+) serves as cofactor. Requires Mg(2+) as cofactor. Expressed in spleen, thymus, lung, testis, kidney, liver and heart.

Its subcellular location is the cytoplasm. It is found in the mitochondrion. With respect to regulation, after binding to 2-5A (5'-phosphorylated 2',5'-linked oligoadenylates) the homodimerization and subsequent activation occurs. Inhibited by RNASEL inhibitor ABCE1/RLI, a cytoplasmic member of the ATP-binding cassette (ABC) transporter family. Endoribonuclease that functions in the interferon (IFN) antiviral response. In INF treated and virus infected cells, RNASEL probably mediates its antiviral effects through a combination of direct cleavage of single-stranded viral RNAs, inhibition of protein synthesis through the degradation of rRNA, induction of apoptosis, and induction of other antiviral genes. RNASEL mediated apoptosis is the result of a JNK-dependent stress-response pathway leading to cytochrome c release from mitochondria and caspase-dependent apoptosis. Therefore, activation of RNASEL could lead to elimination of virus infected cells under some circumstances. In the crosstalk between autophagy and apoptosis proposed to induce autophagy as an early stress response to small double-stranded RNA and at later stages of prolonged stress to activate caspase-dependent proteolytic cleavage of BECN1 to terminate autophagy and promote apoptosis. Might play a central role in the regulation of mRNA turnover. Cleaves 3' of UpNp dimers, with preference for UU and UA sequences, to sets of discrete products ranging from between 4 and 22 nucleotides in length. The polypeptide is 2-5A-dependent ribonuclease (Rnasel) (Mus musculus (Mouse)).